The chain runs to 261 residues: Claudin-18 (261 aa).

The Cytoplasmic segment spans residues Met-1–Cys-6. The chain crosses the membrane as a helical span at residues Gln-7–Met-27. At Asp-28–Arg-80 the chain is on the extracellular side. A helical transmembrane segment spans residues Ala-81–Leu-101. The Cytoplasmic segment spans residues Lys-102–Gly-122. The helical transmembrane segment at Ile-123–Leu-143 threads the bilayer. The Extracellular segment spans residues Val-144–Ala-174. A helical membrane pass occupies residues Leu-175–Ala-195. Residues Ala-195–Val-261 form a required for role in regulation of RANKL-induced osteoclast differentiation region. Residues Cys-196–Val-261 are Cytoplasmic-facing. Ser-214 bears the Phosphoserine mark. A disordered region spans residues Ser-228–Val-261. Positions Lys-239 to Asp-249 are enriched in basic and acidic residues.

The protein belongs to the claudin family. In terms of assembly, interacts with TJP2/ZO-2. Interacts with TJP1/ZO-1. Interacts with YAP1 (phosphorylated); the interaction sequesters YAP1 away from the nucleus and thereby restricts transcription of YAP1 target genes. Interacts with CLDN19.

The protein localises to the cell junction. The protein resides in the tight junction. It localises to the cell membrane. Its function is as follows. Involved in alveolar fluid homeostasis via regulation of alveolar epithelial tight junction composition and therefore ion transport and solute permeability, potentially via downstream regulation of the actin cytoskeleton organization and beta-2-adrenergic signaling. Required for lung alveolarization and maintenance of the paracellular alveolar epithelial barrier. Acts to maintain epithelial progenitor cell proliferation and organ size, via regulation of YAP1 localization away from the nucleus and thereby restriction of YAP1 target gene transcription. Acts as a negative regulator of RANKL-induced osteoclast differentiation, potentially via relocation of TJP2/ZO-2 away from the nucleus, subsequently involved in bone resorption in response to calcium deficiency. Mediates the osteoprotective effects of estrogen, potentially via acting downstream of estrogen signaling independently of RANKL signaling pathways. This Bos taurus (Bovine) protein is Claudin-18 (CLDN18).